Reading from the N-terminus, the 404-residue chain is S-adenosylmethionine synthase (404 aa).

His-18 provides a ligand contact to ATP. Asp-20 is a binding site for Mg(2+). Glu-46 lines the K(+) pocket. Glu-59 and Gln-102 together coordinate L-methionine. A flexible loop region spans residues Gln-102–His-112. Residues Asp-178 to Lys-180, Lys-249 to Phe-250, Asp-258, Arg-264 to Lys-265, Ala-281, and Lys-285 each bind ATP. Asp-258 contacts L-methionine. Lys-289 contacts L-methionine.

The protein belongs to the AdoMet synthase family. Homotetramer; dimer of dimers. It depends on Mg(2+) as a cofactor. Requires K(+) as cofactor.

The protein resides in the cytoplasm. It carries out the reaction L-methionine + ATP + H2O = S-adenosyl-L-methionine + phosphate + diphosphate. Its pathway is amino-acid biosynthesis; S-adenosyl-L-methionine biosynthesis; S-adenosyl-L-methionine from L-methionine: step 1/1. Catalyzes the formation of S-adenosylmethionine (AdoMet) from methionine and ATP. The overall synthetic reaction is composed of two sequential steps, AdoMet formation and the subsequent tripolyphosphate hydrolysis which occurs prior to release of AdoMet from the enzyme. This chain is S-adenosylmethionine synthase, found in Rhodococcus opacus (strain B4).